A 101-amino-acid polypeptide reads, in one-letter code: Small ribosomal subunit protein uS10 (101 aa).

The protein belongs to the universal ribosomal protein uS10 family. As to quaternary structure, part of the 30S ribosomal subunit.

In terms of biological role, involved in the binding of tRNA to the ribosomes. This chain is Small ribosomal subunit protein uS10, found in Mycoplasmopsis synoviae (strain 53) (Mycoplasma synoviae).